Consider the following 194-residue polypeptide: Ion-translocating oxidoreductase complex subunit A (194 aa).

6 consecutive transmembrane segments (helical) span residues 5 to 25, 47 to 67, 72 to 92, 102 to 122, 135 to 155, and 172 to 192; these read VLIL…FLGL, FVLT…LVPF, LRTI…EMFV, VLGV…VALL, LTYG…FAAM, and SIGL…SGLI.

This sequence belongs to the NqrDE/RnfAE family. As to quaternary structure, the complex is composed of six subunits: RnfA, RnfB, RnfC, RnfD, RnfE and RnfG.

It localises to the cell inner membrane. Part of a membrane-bound complex that couples electron transfer with translocation of ions across the membrane. The polypeptide is Ion-translocating oxidoreductase complex subunit A (Alcanivorax borkumensis (strain ATCC 700651 / DSM 11573 / NCIMB 13689 / SK2)).